The following is a 150-amino-acid chain: 3-hydroxyacyl-[acyl-carrier-protein] dehydratase FabZ (150 aa).

Histidine 51 is an active-site residue.

The protein belongs to the thioester dehydratase family. FabZ subfamily.

The protein localises to the cytoplasm. It catalyses the reaction a (3R)-hydroxyacyl-[ACP] = a (2E)-enoyl-[ACP] + H2O. In terms of biological role, involved in unsaturated fatty acids biosynthesis. Catalyzes the dehydration of short chain beta-hydroxyacyl-ACPs and long chain saturated and unsaturated beta-hydroxyacyl-ACPs. This Legionella pneumophila (strain Paris) protein is 3-hydroxyacyl-[acyl-carrier-protein] dehydratase FabZ.